A 438-amino-acid chain; its full sequence is UDP-N-acetylmuramoylalanine--D-glutamate ligase (438 aa).

Residue 112–118 (GSNGKST) participates in ATP binding.

This sequence belongs to the MurCDEF family.

Its subcellular location is the cytoplasm. The enzyme catalyses UDP-N-acetyl-alpha-D-muramoyl-L-alanine + D-glutamate + ATP = UDP-N-acetyl-alpha-D-muramoyl-L-alanyl-D-glutamate + ADP + phosphate + H(+). Its pathway is cell wall biogenesis; peptidoglycan biosynthesis. Cell wall formation. Catalyzes the addition of glutamate to the nucleotide precursor UDP-N-acetylmuramoyl-L-alanine (UMA). In Yersinia pestis bv. Antiqua (strain Antiqua), this protein is UDP-N-acetylmuramoylalanine--D-glutamate ligase.